The primary structure comprises 337 residues: GTPase Obg (337 aa).

In terms of domain architecture, Obg spans 1 to 158; sequence MFVDRVIIEL…HHIELELKLI (158 aa). Residues 159 to 330 form the OBG-type G domain; the sequence is ADVGLVGFPN…LIEKMTQRLS (172 aa). GTP is bound by residues 165–172, 190–194, 212–215, 282–285, and 311–313; these read GFPNAGKS, FTTLQ, DIPG, NKID, and SAV. Mg(2+) is bound by residues S172 and T192.

It belongs to the TRAFAC class OBG-HflX-like GTPase superfamily. OBG GTPase family. In terms of assembly, monomer. Requires Mg(2+) as cofactor.

The protein resides in the cytoplasm. In terms of biological role, an essential GTPase which binds GTP, GDP and possibly (p)ppGpp with moderate affinity, with high nucleotide exchange rates and a fairly low GTP hydrolysis rate. Plays a role in control of the cell cycle, stress response, ribosome biogenesis and in those bacteria that undergo differentiation, in morphogenesis control. The protein is GTPase Obg of Protochlamydia amoebophila (strain UWE25).